Consider the following 320-residue polypeptide: 4-hydroxy-3-methylbut-2-enyl diphosphate reductase (320 aa).

Cys13 is a binding site for [4Fe-4S] cluster. (2E)-4-hydroxy-3-methylbut-2-enyl diphosphate-binding residues include His41 and His75. Dimethylallyl diphosphate-binding residues include His41 and His75. His41 and His75 together coordinate isopentenyl diphosphate. Cys97 contacts [4Fe-4S] cluster. His125 is a (2E)-4-hydroxy-3-methylbut-2-enyl diphosphate binding site. His125 provides a ligand contact to dimethylallyl diphosphate. Position 125 (His125) interacts with isopentenyl diphosphate. Glu127 functions as the Proton donor in the catalytic mechanism. Thr168 lines the (2E)-4-hydroxy-3-methylbut-2-enyl diphosphate pocket. Residue Cys225 participates in [4Fe-4S] cluster binding. Positions 253, 254, 255, and 302 each coordinate (2E)-4-hydroxy-3-methylbut-2-enyl diphosphate. The dimethylallyl diphosphate site is built by Ser253, Ser254, Asn255, and Ser302. Isopentenyl diphosphate-binding residues include Ser253, Ser254, Asn255, and Ser302.

This sequence belongs to the IspH family. [4Fe-4S] cluster serves as cofactor.

The catalysed reaction is isopentenyl diphosphate + 2 oxidized [2Fe-2S]-[ferredoxin] + H2O = (2E)-4-hydroxy-3-methylbut-2-enyl diphosphate + 2 reduced [2Fe-2S]-[ferredoxin] + 2 H(+). It carries out the reaction dimethylallyl diphosphate + 2 oxidized [2Fe-2S]-[ferredoxin] + H2O = (2E)-4-hydroxy-3-methylbut-2-enyl diphosphate + 2 reduced [2Fe-2S]-[ferredoxin] + 2 H(+). It participates in isoprenoid biosynthesis; dimethylallyl diphosphate biosynthesis; dimethylallyl diphosphate from (2E)-4-hydroxy-3-methylbutenyl diphosphate: step 1/1. Its pathway is isoprenoid biosynthesis; isopentenyl diphosphate biosynthesis via DXP pathway; isopentenyl diphosphate from 1-deoxy-D-xylulose 5-phosphate: step 6/6. In terms of biological role, catalyzes the conversion of 1-hydroxy-2-methyl-2-(E)-butenyl 4-diphosphate (HMBPP) into a mixture of isopentenyl diphosphate (IPP) and dimethylallyl diphosphate (DMAPP). Acts in the terminal step of the DOXP/MEP pathway for isoprenoid precursor biosynthesis. This Chlorobium luteolum (strain DSM 273 / BCRC 81028 / 2530) (Pelodictyon luteolum) protein is 4-hydroxy-3-methylbut-2-enyl diphosphate reductase.